Reading from the N-terminus, the 288-residue chain is Diaminopimelate epimerase (288 aa).

The substrate site is built by asparagine 14 and asparagine 67. The active-site Proton donor is cysteine 76. Residues 77–78 (GN), asparagine 166, asparagine 199, and 217–218 (ER) each bind substrate. Cysteine 226 acts as the Proton acceptor in catalysis. 227-228 (GT) serves as a coordination point for substrate.

Belongs to the diaminopimelate epimerase family. Homodimer.

The protein resides in the cytoplasm. It carries out the reaction (2S,6S)-2,6-diaminopimelate = meso-2,6-diaminopimelate. It participates in amino-acid biosynthesis; L-lysine biosynthesis via DAP pathway; DL-2,6-diaminopimelate from LL-2,6-diaminopimelate: step 1/1. Its function is as follows. Catalyzes the stereoinversion of LL-2,6-diaminopimelate (L,L-DAP) to meso-diaminopimelate (meso-DAP), a precursor of L-lysine and an essential component of the bacterial peptidoglycan. This Bacillus thuringiensis (strain Al Hakam) protein is Diaminopimelate epimerase.